The chain runs to 468 residues: UDP-N-acetylmuramate--L-alanine ligase (468 aa).

An ATP-binding site is contributed by 112–118 (GTHGKTT).

This sequence belongs to the MurCDEF family.

The protein resides in the cytoplasm. The enzyme catalyses UDP-N-acetyl-alpha-D-muramate + L-alanine + ATP = UDP-N-acetyl-alpha-D-muramoyl-L-alanine + ADP + phosphate + H(+). The protein operates within cell wall biogenesis; peptidoglycan biosynthesis. Its function is as follows. Cell wall formation. The polypeptide is UDP-N-acetylmuramate--L-alanine ligase (Bordetella petrii (strain ATCC BAA-461 / DSM 12804 / CCUG 43448)).